The chain runs to 495 residues: Ectonucleoside triphosphate diphosphohydrolase 2 (495 aa).

Over 1-7 the chain is Cytoplasmic; sequence MAGKVRS. Residues 8 to 28 form a helical membrane-spanning segment; it reads LLPPLLLAAAGLAGLLLLCVP. Topologically, residues 29–462 are extracellular; the sequence is TRDVREPPAL…PGLRKGTDFS (434 aa). N64 carries an N-linked (GlcNAc...) asparagine glycan. C75 and C99 are joined by a disulfide. Residue N129 is glycosylated (N-linked (GlcNAc...) asparagine). The active-site Proton acceptor is E165. 204–208 lines the ATP pocket; it reads GASTQ. Disulfide bonds link C242–C284, C265–C310, C323–C328, and C377–C399. N294 carries N-linked (GlcNAc...) asparagine glycosylation. N-linked (GlcNAc...) asparagine glycans are attached at residues N378 and N443. Residues 463–483 traverse the membrane as a helical segment; that stretch reads SWVVLLLLFASALLAALVLLL. Residues 484–495 are Cytoplasmic-facing; that stretch reads RQVHSAKLPSTI.

Belongs to the GDA1/CD39 NTPase family. Ca(2+) serves as cofactor. It depends on Mg(2+) as a cofactor. In terms of tissue distribution, brain, placenta, skeletal muscle, kidney, pancreas, heart, ovary, testis, colon, small intestine, prostate and pancreas. No expression in adult thymus, spleen, lung, liver and peripheral blood leukocytes.

Its subcellular location is the cell membrane. The protein localises to the endoplasmic reticulum membrane. Functionally, in the nervous system, could hydrolyze ATP and other nucleotides to regulate purinergic neurotransmission. Hydrolyzes ADP only to a marginal extent. The order of activity with different substrates is ATP &gt; GTP &gt; CTP = ITP &gt; UTP &gt;&gt; ADP = UDP. This Homo sapiens (Human) protein is Ectonucleoside triphosphate diphosphohydrolase 2 (ENTPD2).